A 110-amino-acid polypeptide reads, in one-letter code: Phosphoribosyl-AMP cyclohydrolase (110 aa).

Asp80 provides a ligand contact to Mg(2+). Cys81 is a Zn(2+) binding site. Residues Asp82 and Asp84 each contribute to the Mg(2+) site. 2 residues coordinate Zn(2+): Cys97 and Cys104.

It belongs to the PRA-CH family. In terms of assembly, homodimer. It depends on Mg(2+) as a cofactor. Zn(2+) is required as a cofactor.

The protein localises to the cytoplasm. The catalysed reaction is 1-(5-phospho-beta-D-ribosyl)-5'-AMP + H2O = 1-(5-phospho-beta-D-ribosyl)-5-[(5-phospho-beta-D-ribosylamino)methylideneamino]imidazole-4-carboxamide. It functions in the pathway amino-acid biosynthesis; L-histidine biosynthesis; L-histidine from 5-phospho-alpha-D-ribose 1-diphosphate: step 3/9. Catalyzes the hydrolysis of the adenine ring of phosphoribosyl-AMP. In Clostridium botulinum (strain Kyoto / Type A2), this protein is Phosphoribosyl-AMP cyclohydrolase.